Here is a 649-residue protein sequence, read N- to C-terminus: Sodium/nucleoside cotransporter 1 (649 aa).

Residues 1-80 (MENDPSRRRE…ARSFCREHMQ (80 aa)) lie on the Cytoplasmic side of the membrane. Residues 81-104 (LFRWIGTGLLCTGLSAFLLVACLL) form a helical membrane-spanning segment. Residues 105 to 109 (DFQRA) are Extracellular-facing. A helical transmembrane segment spans residues 110-128 (LALFVLTCVVLTFLGHRLL). Residues 129-147 (KRLLGPKLRRFLKPQGHPR) lie on the Cytoplasmic side of the membrane. Residues 148 to 167 (LLLWFKRGLALAAFLGLVLW) traverse the membrane as a helical segment. The Extracellular portion of the chain corresponds to 168–178 (LSLDTSQRPEQ). Residues 179 to 195 (LVSFAGICVFVALLFAC) traverse the membrane as a helical segment. Over 196 to 201 (SKHHCA) the chain is Cytoplasmic. Residues 202 to 222 (VSWRAVSWGLGLQFVLGLLVI) traverse the membrane as a helical segment. At 223–261 (RTEPGFIAFEWLGEQIRIFLSYTKAGSSFVFGEALVKDV) the chain is on the extracellular side. The chain crosses the membrane as a helical span at residues 262–283 (FAFQVLPIIVFFSCVISVLYHV). Over 284–294 (GLMQWVILKIA) the chain is Cytoplasmic. A helical membrane pass occupies residues 295-318 (WLMQVTMGTTATETLSVAGNIFVS). Over 319 to 337 (QTEAPLLIRPYLADMTLSE) the chain is Extracellular. A helical transmembrane segment spans residues 338-360 (VHVVMTGGYATIAGSLLGAYISF). Residues 361–366 (GIDATS) lie on the Cytoplasmic side of the membrane. Residues 367 to 386 (LIAASVMAAPCALALSKLVY) form a helical membrane-spanning segment. At 387-423 (PEVEESKFRREEGVKLTYGDAQNLIEAASTGAAISVK) the chain is on the extracellular side. The chain crosses the membrane as a helical span at residues 424-446 (VVANIAANLIAFLAVLDFINAAL). At 447–457 (SWLGDMVDIQG) the chain is on the cytoplasmic side. Residues 458–479 (LSFQLICSYILRPVAFLMGVAW) form a helical membrane-spanning segment. The Extracellular portion of the chain corresponds to 480–534 (EDCPVVAELLGIKLFLNEFVAYQDLSKYKQRRLAGAEEWVGDRKQWISVRAEVLT). Residues 535-558 (TFALCGFANFSSIGIMLGGLTSMV) traverse the membrane as a helical segment. The Cytoplasmic segment spans residues 559-569 (PQRKSDFSQIV). Residues 570 to 592 (LRALFTGACVSLVNACMAGILYM) form a helical membrane-spanning segment. Topologically, residues 593-649 (PRGAEVDCMSLLNTTLSSSSFEIYQCCREAFQSVNPEFSPEALDNCCRFYNHTICAQ) are extracellular. N-linked (GlcNAc...) asparagine glycosylation is found at N605 and N643.

The protein belongs to the concentrative nucleoside transporter (CNT) (TC 2.A.41) family. N-glycosylated. N-glycosylation is required for localization to the plasma membrane and the transporter activity. In terms of tissue distribution, expressed in kidney.

Its subcellular location is the cell membrane. It is found in the apical cell membrane. It carries out the reaction uridine(out) + Na(+)(out) = uridine(in) + Na(+)(in). The catalysed reaction is thymidine(out) + Na(+)(out) = thymidine(in) + Na(+)(in). The enzyme catalyses cytidine(out) + Na(+)(out) = cytidine(in) + Na(+)(in). It catalyses the reaction adenosine(out) + Na(+)(out) = adenosine(in) + Na(+)(in). Its activity is regulated as follows. Due to its high apparent affinity but slow transport, adenosine could act as a negative regulator of pyrimidine transport under some conditions. Its function is as follows. Sodium and pyrimidine nucleoside symporter of the plasma membrane that imports uridine, thymidine and cytidine into cells by coupling their transport to the transmembrane sodium electrochemical gradient. Also transports adenosine, an atypical substrate transported with high apparent affinity, but low maximum velocity. Therefore, exhibits the transport characteristics of the nucleoside transport system cit or N2 subtype (N2/cit). Involved in renal nucleoside (re)absorption. The sequence is that of Sodium/nucleoside cotransporter 1 from Homo sapiens (Human).